The following is a 338-amino-acid chain: MLSALARPASAVLRRSFSTSAQNNAKVAVLGASGGIGQPLSLLLKNSPLVSRLTLYDIAHTPGVAADLSHIETKATVKGYLGPEQLPDCLKGCDVVVIPAGVPRKPGMTRDDLFNTNATIVATLTSACAQHCPEAMICVIANPVNSTIPITAEVFKKHGVYNPNKIFGVTTLDIVRANTFVAELKGLDPARVNVPVIGGHAGKTIIPLISQCTPKVDFPQDQLTALTGRIQEAGTEVVKAKAGAGSATLSMAYAGARFVFSLVDAMNGKEGVVECSFVKSQETECTYFSTPLLLGKKGIEKNLGIGKVSSFEEKMISDAIPELKASIKKGEDFVKTLK.

The N-terminal 24 residues, 1 to 24, are a transit peptide targeting the mitochondrion; that stretch reads MLSALARPASAVLRRSFSTSAQNN. NAD(+) contacts are provided by residues 31-37 and Asp-57; that span reads GASGGIG. Ser-33 carries O-linked (GlcNAc) serine glycosylation. N6-acetyllysine; alternate is present on residues Lys-78 and Lys-91. 2 positions are modified to N6-succinyllysine; alternate: Lys-78 and Lys-91. Residues Arg-104 and Arg-110 each contribute to the substrate site. Residues Asn-117 and 140–142 each bind NAD(+); that span reads IAN. Asn-142 is a substrate binding site. At Lys-165 the chain carries N6-acetyllysine. A substrate-binding site is contributed by Arg-176. Position 185 is an N6-acetyllysine; alternate (Lys-185). Lys-185 bears the N6-succinyllysine; alternate mark. His-200 acts as the Proton acceptor in catalysis. An N6-succinyllysine modification is found at Lys-203. N6-acetyllysine; alternate occurs at positions 215 and 239. 2 positions are modified to N6-succinyllysine; alternate: Lys-215 and Lys-239. At Lys-239 the chain carries N6-malonyllysine; alternate. Ser-246 carries the post-translational modification Phosphoserine. An NAD(+)-binding site is contributed by Met-251. Lys-269 carries the N6-succinyllysine modification. An N6-acetyllysine; alternate mark is found at Lys-296, Lys-301, Lys-307, Lys-314, and Lys-324. Residues Lys-296, Lys-301, Lys-307, Lys-314, and Lys-324 each carry the N6-succinyllysine; alternate modification. Lys-307 carries the N6-malonyllysine; alternate modification. Ser-326 is modified (phosphoserine). 3 positions are modified to N6-acetyllysine; alternate: Lys-328, Lys-329, and Lys-335. Lys-328 carries the post-translational modification N6-succinyllysine; alternate. Lys-329 bears the N6-malonyllysine; alternate mark. Residue Lys-335 is modified to N6-succinyllysine; alternate.

Belongs to the LDH/MDH superfamily. MDH type 1 family. Homodimer. Post-translationally, acetylation is enhanced after treatment either with trichostin A (TCA) or with nicotinamide (NAM) with the appearance of tri- and tetraacetylations. Glucose also increases acetylation.

It localises to the mitochondrion matrix. The catalysed reaction is (S)-malate + NAD(+) = oxaloacetate + NADH + H(+). Its activity is regulated as follows. Enzyme activity is enhanced by acetylation. This Pongo abelii (Sumatran orangutan) protein is Malate dehydrogenase, mitochondrial (MDH2).